A 439-amino-acid chain; its full sequence is Methylenetetrahydrofolate--tRNA-(uracil-5-)-methyltransferase TrmFO (439 aa).

Position 8-13 (8-13 (GAGLAG)) interacts with FAD.

Belongs to the MnmG family. TrmFO subfamily. FAD is required as a cofactor.

Its subcellular location is the cytoplasm. The catalysed reaction is uridine(54) in tRNA + (6R)-5,10-methylene-5,6,7,8-tetrahydrofolate + NADH + H(+) = 5-methyluridine(54) in tRNA + (6S)-5,6,7,8-tetrahydrofolate + NAD(+). It catalyses the reaction uridine(54) in tRNA + (6R)-5,10-methylene-5,6,7,8-tetrahydrofolate + NADPH + H(+) = 5-methyluridine(54) in tRNA + (6S)-5,6,7,8-tetrahydrofolate + NADP(+). In terms of biological role, catalyzes the folate-dependent formation of 5-methyl-uridine at position 54 (M-5-U54) in all tRNAs. The polypeptide is Methylenetetrahydrofolate--tRNA-(uracil-5-)-methyltransferase TrmFO (Lacticaseibacillus paracasei (strain ATCC 334 / BCRC 17002 / CCUG 31169 / CIP 107868 / KCTC 3260 / NRRL B-441) (Lactobacillus paracasei)).